Here is a 425-residue protein sequence, read N- to C-terminus: Amidase 1 (425 aa).

Ala-2 is modified (N-acetylalanine). Residues Lys-36 and Ser-113 each act as charge relay system in the active site. Residue Ser-137 is the Acyl-ester intermediate of the active site.

It belongs to the amidase family. Expressed in cotyledons, leaves and flower buds. Lower levels in roots, stems and siliques.

The protein resides in the cytoplasm. It is found in the nucleus. It localises to the nucleoplasm. It catalyses the reaction a monocarboxylic acid amide + H2O = a monocarboxylate + NH4(+). The enzyme catalyses indole-3-acetamide + H2O = (indol-3-yl)acetate + NH4(+). The catalysed reaction is 2-phenylacetamide + H2O = 2-phenylacetate + NH4(+). It carries out the reaction L-asparagine + H2O = L-aspartate + NH4(+). It catalyses the reaction 1-naphthaleneacetamide + H2O = 1-naphthaleneacetate + NH4(+). Inhibited by phenylmethylsulfonyl fluoride (PMSF). Its function is as follows. Amidase involved in auxin biosynthesis. Converts indole-3-acetamide to indole-3-acetate. Converts phenyl-2-acetamide (PAM) to phenyl-2-acetate. Substrate preference is PAM &gt; IAM. Can also use L-asparagine and 1-naphtalene-acetamide as substrates, but not indole-3-acetonitrile or indole-3-acetyl-L-aspartic acid. In Arabidopsis thaliana (Mouse-ear cress), this protein is Amidase 1.